A 377-amino-acid polypeptide reads, in one-letter code: Histone deacetylase 8 (377 aa).

Positions 5–336 are histone deacetylase; the sequence is RVDVFWHEGM…LHAMLEGVLK (332 aa). Catalysis depends on histidine 145, which acts as the Proton donor/acceptor. The Zn(2+) site is built by aspartate 182, histidine 184, and aspartate 274.

Belongs to the histone deacetylase family. The cofactor is Zn(2+). In terms of tissue distribution, expressed in stems, leaves, flowers, siliques and mature seeds.

The protein resides in the nucleus. It is found in the cytoplasm. It carries out the reaction N(6)-acetyl-L-lysyl-[histone] + H2O = L-lysyl-[histone] + acetate. Responsible for the deacetylation of lysine residues on the N-terminal part of the core histones (H2A, H2B, H3 and H4). Histone deacetylation gives a tag for epigenetic repression and plays an important role in transcriptional regulation, cell cycle progression and developmental events. Histone deacetylases act via the formation of large multiprotein complexes. This is Histone deacetylase 8 from Arabidopsis thaliana (Mouse-ear cress).